A 565-amino-acid chain; its full sequence is Dihydroxy-acid dehydratase (565 aa).

Cys53 is a binding site for [2Fe-2S] cluster. Mg(2+) is bound at residue Asp85. Residue Cys126 coordinates [2Fe-2S] cluster. Asp127 and Lys128 together coordinate Mg(2+). Residue Lys128 is modified to N6-carboxylysine. Position 198 (Cys198) interacts with [2Fe-2S] cluster. Residue Glu450 participates in Mg(2+) binding. Catalysis depends on Ser476, which acts as the Proton acceptor.

It belongs to the IlvD/Edd family. In terms of assembly, homodimer. [2Fe-2S] cluster serves as cofactor. Requires Mg(2+) as cofactor.

It catalyses the reaction (2R)-2,3-dihydroxy-3-methylbutanoate = 3-methyl-2-oxobutanoate + H2O. The catalysed reaction is (2R,3R)-2,3-dihydroxy-3-methylpentanoate = (S)-3-methyl-2-oxopentanoate + H2O. Its pathway is amino-acid biosynthesis; L-isoleucine biosynthesis; L-isoleucine from 2-oxobutanoate: step 3/4. It functions in the pathway amino-acid biosynthesis; L-valine biosynthesis; L-valine from pyruvate: step 3/4. Its function is as follows. Functions in the biosynthesis of branched-chain amino acids. Catalyzes the dehydration of (2R,3R)-2,3-dihydroxy-3-methylpentanoate (2,3-dihydroxy-3-methylvalerate) into 2-oxo-3-methylpentanoate (2-oxo-3-methylvalerate) and of (2R)-2,3-dihydroxy-3-methylbutanoate (2,3-dihydroxyisovalerate) into 2-oxo-3-methylbutanoate (2-oxoisovalerate), the penultimate precursor to L-isoleucine and L-valine, respectively. The sequence is that of Dihydroxy-acid dehydratase from Synechococcus sp. (strain JA-3-3Ab) (Cyanobacteria bacterium Yellowstone A-Prime).